An 862-amino-acid chain; its full sequence is Eukaryotic translation initiation factor 3 subunit C (862 aa).

Residues 1 to 10 are compositionally biased toward gly residues; the sequence is MSRFFYGGGS. Residues 1–81 form a disordered region; sequence MSRFFYGGGS…DEEKTTVVKS (81 aa). Residues 16–52 show a composition bias toward acidic residues; that stretch reads SSDEEELYERDEEEQSEEEESSEEEETSEEGSDDEEG. A PCI domain is found at 601–775; it reads FHMHINLELL…GAIVFRKGVE (175 aa). The interval 814–862 is disordered; that stretch reads RDQGAGARGGRGGGRGGHARGGARFPGQQGRRPGGQQFGGGALGGAIKA. Residues 819-833 are compositionally biased toward gly residues; it reads GARGGRGGGRGGHAR. Low complexity predominate over residues 835–844; it reads GARFPGQQGR. A compositionally biased stretch (gly residues) spans 845–862; it reads RPGGQQFGGGALGGAIKA.

The protein belongs to the eIF-3 subunit C family. As to quaternary structure, component of the eukaryotic translation initiation factor 3 (eIF-3) complex.

The protein resides in the cytoplasm. Component of the eukaryotic translation initiation factor 3 (eIF-3) complex, which is involved in protein synthesis of a specialized repertoire of mRNAs and, together with other initiation factors, stimulates binding of mRNA and methionyl-tRNAi to the 40S ribosome. The eIF-3 complex specifically targets and initiates translation of a subset of mRNAs involved in cell proliferation. This chain is Eukaryotic translation initiation factor 3 subunit C (nip1), found in Aspergillus clavatus (strain ATCC 1007 / CBS 513.65 / DSM 816 / NCTC 3887 / NRRL 1 / QM 1276 / 107).